A 744-amino-acid chain; its full sequence is Palmitoyltransferase ZDHHC5-A (744 aa).

Residues 1 to 11 (MPSGSMSGGVS) are compositionally biased toward gly residues. The tract at residues 1–25 (MPSGSMSGGVSGPTSPPHPTVPSRP) is disordered. Residues 1–30 (MPSGSMSGGVSGPTSPPHPTVPSRPLRPSR) lie on the Cytoplasmic side of the membrane. The helical transmembrane segment at 31–51 (YVPVSAATAFLVGSTTLFFCF) threads the bilayer. Topologically, residues 52–61 (TCPWLSEQFS) are extracellular. The chain crosses the membrane as a helical span at residues 62–82 (VAVPIYNGVMFMFVLANFCMA). Residues 83 to 167 (TFMDPGIFPR…IGRRNYRYFF (85 aa)) lie on the Cytoplasmic side of the membrane. The DHHC domain maps to 121-171 (KWCSTCRFYRPPRCSHCSVCDNCVEDFDHHCPWVNNCIGRRNYRYFFLFLL). Cys151 acts as the S-palmitoyl cysteine intermediate in catalysis. Residues 168–188 (LFLLSLTAHIMGVFGFGLLFI) traverse the membrane as a helical segment. At 189 to 208 (LYHTQQLDRVHSAVTMAVMC) the chain is on the extracellular side. The chain crosses the membrane as a helical span at residues 209–229 (VAGLFFIPVAGLTGFHVVLVA). Over 230 to 744 (RGRTTNEQVT…VGGTTYEISV (515 aa)) the chain is Cytoplasmic. Disordered regions lie at residues 314-523 (SLEM…PVVG), 556-645 (QHAV…SLSY), and 664-744 (SVAG…EISV). The span at 369-393 (TYSSPGKNHTALTHAYANQSSQQPG) shows a compositional bias: polar residues. The segment covering 398–413 (PSLDGREGGGAERSGA) has biased composition (basic and acidic residues). Residues 415-428 (RTGGGPGGPPGSGI) are compositionally biased toward gly residues. The segment covering 460-501 (THNAPPSEATTSTSYKSLANQTPPQAARNGSLSYDSLLTPSE) has biased composition (polar residues). Residues 571–584 (PERERERLLHDSQA) are compositionally biased toward basic and acidic residues. A compositionally biased stretch (basic residues) spans 585–601 (QHHHHHHHHHHHHRPPR). Composition is skewed to low complexity over residues 621–630 (RTRSTDTTHP) and 689–723 (PKPSSTPSSPTHPISVSTRPGQAHSSAGSSQSPAH). The span at 725-737 (PGGGVKKVTGVGG) shows a compositional bias: gly residues.

The protein belongs to the DHHC palmitoyltransferase family. ERF2/ZDHHC9 subfamily.

The protein localises to the cell membrane. The enzyme catalyses L-cysteinyl-[protein] + hexadecanoyl-CoA = S-hexadecanoyl-L-cysteinyl-[protein] + CoA. In terms of biological role, palmitoyltransferase that catalyzes the addition of palmitate onto various protein substrates and is involved in a variety of cellular processes. The protein is Palmitoyltransferase ZDHHC5-A of Danio rerio (Zebrafish).